The sequence spans 555 residues: Coiled-coil domain-containing protein 102A (555 aa).

Disordered regions lie at residues 1 to 68 (MSHG…ADGD), 136 to 202 (LAGA…GSQE), and 214 to 254 (PEEP…EEDA). A phosphoserine mark is found at Ser-12, Ser-26, and Ser-28. A compositionally biased stretch (pro residues) spans 37 to 61 (SLPPTPPSGTPSPGPPPALPLPPTP). The stretch at 72–161 (REELRLRELE…ARGRELARLR (90 aa)) forms a coiled coil. Basic and acidic residues-rich tracts occupy residues 136–159 (LAGARRERQEAQGESEARGRELAR) and 166–183 (GVDRTPDGPETEPEREQE). A compositionally biased stretch (low complexity) spans 224 to 236 (RSAGAGAPRGSSG). Coiled-coil stretches lie at residues 268 to 401 (QKVL…RRQT) and 432 to 522 (KLKK…QNAP). The interval 478-555 (ELDEAHNQAR…EDEDLQIQVA (78 aa)) is disordered. A compositionally biased stretch (acidic residues) spans 536–555 (EAGDGASDLDEDEDLQIQVA). Ser-542 is modified (phosphoserine).

The polypeptide is Coiled-coil domain-containing protein 102A (CCDC102A) (Bos taurus (Bovine)).